Here is a 363-residue protein sequence, read N- to C-terminus: Probable dual-specificity RNA methyltransferase RlmN (363 aa).

Glu-106 serves as the catalytic Proton acceptor. The Radical SAM core domain occupies His-112 to Asp-345. An intrachain disulfide couples Cys-119 to Cys-350. [4Fe-4S] cluster-binding residues include Cys-126, Cys-130, and Cys-133. Residues Gly-176–Glu-177, Ser-208, Ser-231–His-233, and Asn-307 each bind S-adenosyl-L-methionine. The active-site S-methylcysteine intermediate is the Cys-350.

Belongs to the radical SAM superfamily. RlmN family. [4Fe-4S] cluster serves as cofactor.

Its subcellular location is the cytoplasm. The enzyme catalyses adenosine(2503) in 23S rRNA + 2 reduced [2Fe-2S]-[ferredoxin] + 2 S-adenosyl-L-methionine = 2-methyladenosine(2503) in 23S rRNA + 5'-deoxyadenosine + L-methionine + 2 oxidized [2Fe-2S]-[ferredoxin] + S-adenosyl-L-homocysteine. The catalysed reaction is adenosine(37) in tRNA + 2 reduced [2Fe-2S]-[ferredoxin] + 2 S-adenosyl-L-methionine = 2-methyladenosine(37) in tRNA + 5'-deoxyadenosine + L-methionine + 2 oxidized [2Fe-2S]-[ferredoxin] + S-adenosyl-L-homocysteine. Specifically methylates position 2 of adenine 2503 in 23S rRNA and position 2 of adenine 37 in tRNAs. The sequence is that of Probable dual-specificity RNA methyltransferase RlmN from Bacillus subtilis (strain 168).